Reading from the N-terminus, the 271-residue chain is Phosphatidylglycerol--prolipoprotein diacylglyceryl transferase (271 aa).

7 helical membrane-spanning segments follow: residues 21 to 41 (ISVRWYGLMYLFGFLFAMWLA), 60 to 80 (LLFAGFLGVVLGGRIGYVLFY), 95 to 115 (VWTGGMSFHGGLLGVITAMLW), 124 to 144 (FFGVADFVAPLVPFGLGVGRL), 176 to 196 (SQLYEMALEGVLLFFILNWFI), 203 to 223 (GSVSGLFLAGYGTFRFLVEYV), and 230 to 250 (LGLFGGFISMGQILSSPMIIG). R143 lines the a 1,2-diacyl-sn-glycero-3-phospho-(1'-sn-glycerol) pocket.

It belongs to the Lgt family.

It localises to the cell inner membrane. The catalysed reaction is L-cysteinyl-[prolipoprotein] + a 1,2-diacyl-sn-glycero-3-phospho-(1'-sn-glycerol) = an S-1,2-diacyl-sn-glyceryl-L-cysteinyl-[prolipoprotein] + sn-glycerol 1-phosphate + H(+). The protein operates within protein modification; lipoprotein biosynthesis (diacylglyceryl transfer). In terms of biological role, catalyzes the transfer of the diacylglyceryl group from phosphatidylglycerol to the sulfhydryl group of the N-terminal cysteine of a prolipoprotein, the first step in the formation of mature lipoproteins. In Vibrio vulnificus (strain YJ016), this protein is Phosphatidylglycerol--prolipoprotein diacylglyceryl transferase.